The following is a 483-amino-acid chain: UDP-glycosyltransferase 85C1 (483 aa).

UDP-alpha-D-glucose contacts are provided by residues serine 304, 360-361 (WC), 378-386 (HCGWGSIIE), and 400-403 (IGDQ).

Belongs to the UDP-glycosyltransferase family.

Functionally, may glycosylate diterpenes or flavonols in leaves. This chain is UDP-glycosyltransferase 85C1, found in Stevia rebaudiana (Stevia).